The chain runs to 257 residues: Probable enoyl-CoA hydratase echA17 (257 aa).

The protein belongs to the enoyl-CoA hydratase/isomerase family.

The enzyme catalyses a (3S)-3-hydroxyacyl-CoA = a (2E)-enoyl-CoA + H2O. The catalysed reaction is a 4-saturated-(3S)-3-hydroxyacyl-CoA = a (3E)-enoyl-CoA + H2O. Functionally, could possibly oxidize fatty acids using specific components. The sequence is that of Probable enoyl-CoA hydratase echA17 (echA17) from Mycolicibacterium paratuberculosis (strain ATCC BAA-968 / K-10) (Mycobacterium paratuberculosis).